We begin with the raw amino-acid sequence, 715 residues long: Integrator complex subunit 13 (715 aa).

2 disordered regions span residues 572–612 (KPPE…SERI) and 626–659 (AEVI…SKGP). The Nuclear localization signal (NLS) signature appears at 581–591 (KRGRKREDKEE). Residues 658-703 (GPMSLLSLWSSRINTANSRKHQEFVGRLNSVNNKAELYQHLKEENG) are cleavage module binding motif (CMBM).

This sequence belongs to the Integrator subunit 13 family. In terms of assembly, component of the Integrator complex, composed of core subunits INTS1, INTS2, INTS3, INTS4, INTS5, INTS6, INTS7, INTS8, INTS9/RC74, INTS10, INTS11/CPSF3L, INTS12, INTS13, INTS14 and INTS15. The core complex associates with protein phosphatase 2A subunits PPP2CA and PPP2R1A, to form the Integrator-PP2A (INTAC) complex. INTS13 is part of the tail subcomplex, composed of INTS10, INTS13, INTS14 and INTS15.

It is found in the nucleus. It localises to the cytoplasm. Functionally, component of the integrator complex, a multiprotein complex that terminates RNA polymerase II (Pol II) transcription in the promoter-proximal region of genes. The integrator complex provides a quality checkpoint during transcription elongation by driving premature transcription termination of transcripts that are unfavorably configured for transcriptional elongation: the complex terminates transcription by (1) catalyzing dephosphorylation of the C-terminal domain (CTD) of Pol II subunit POLR2A/RPB1 and SUPT5H/SPT5, (2) degrading the exiting nascent RNA transcript via endonuclease activity and (3) promoting the release of Pol II from bound DNA. The integrator complex is also involved in terminating the synthesis of non-coding Pol II transcripts, such as enhancer RNAs (eRNAs), small nuclear RNAs (snRNAs), telomerase RNAs and long non-coding RNAs (lncRNAs). Within the integrator complex, INTS13 is part of the integrator tail module and acts as a platform for the recruitment of transcription factors at promoters. Plays a role in gastrulation and early embryogenesis. This Xenopus laevis (African clawed frog) protein is Integrator complex subunit 13.